A 101-amino-acid polypeptide reads, in one-letter code: Small ribosomal subunit protein uS14 (101 aa).

It belongs to the universal ribosomal protein uS14 family. In terms of assembly, part of the 30S ribosomal subunit. Contacts proteins S3 and S10.

Its function is as follows. Binds 16S rRNA, required for the assembly of 30S particles and may also be responsible for determining the conformation of the 16S rRNA at the A site. In Rhizobium meliloti (strain 1021) (Ensifer meliloti), this protein is Small ribosomal subunit protein uS14.